The following is a 422-amino-acid chain: MALRGCHRLEVIFKRCIASPVLHSQAGNRRSSQLAIKGVDPNSNGNSGQYQQNGEHKEKGWRRLVRFFVPFSLGAAVSAAIIQREDFTPTIAASKMTGRRRDFNFIADVVAGCADSVVYIEIKDTRHFDYFSGQPITASNGSGFIIEQNGLILTNAHVVINKPHTMVQVRLSDGRTFPATIEDVDQTSDLATLRIQVNNLSVMRLGKSSTLRSGEWVVALGSPLALSNTVTAGVISSTQRASQELGLRNRDINYLQTDAAITFGNSGGPLVNLDGEAIGVNSMKVTAGISFAIPIDYVKVFLERAAEKRKKGSAYKTGYPVKRYMGITMLTLTPDILFELKSRSQNMPNNLTHGVLVWKVIVGSPAHSGGLQPGDIVTHINKKEIKNSSDVYDALADNSKTLDIVILRGVKQMHVTITPEDP.

The transit peptide at Met-1–Ile-17 directs the protein to the mitochondrion. A propeptide spanning residues Ala-18–Gly-74 is cleaved from the precursor. The disordered stretch occupies residues Gln-33–Glu-55. Residues Asn-42 to Asn-53 show a composition bias toward low complexity. Residues Leu-64 to Ile-82 form a helical membrane-spanning segment. 2 short sequence motifs (IAP-binding) span residues Ala-75 to Ser-78 and Ser-94 to Thr-97. The serine protease stretch occupies residues Ser-139–Leu-302. Catalysis depends on charge relay system residues His-157, Asp-189, and Ser-266. The PDZ domain maps to Met-325–Val-410.

Belongs to the peptidase S1C family. In terms of assembly, interacts with th/DIAP1 (via BIR 2 domain).

Its subcellular location is the mitochondrion intermembrane space. The protein resides in the mitochondrion membrane. The catalysed reaction is Cleavage of non-polar aliphatic amino-acids at the P1 position, with a preference for Val, Ile and Met. At the P2 and P3 positions, Arg is selected most strongly with a secondary preference for other hydrophilic residues.. Its function is as follows. Serine protease that shows proteolytic activity against a non-specific substrate beta-casein. Promotes or induces cell death either by direct binding to and inhibition of BIRC proteins (also called inhibitor of apoptosis proteins, IAPs), leading to an increase in caspase activity, or by a BIRC inhibition-independent, caspase-independent and serine protease activity-dependent mechanism. Can antagonize antiapoptotic activity of th/Diap1 by directly inducing the degradation of th/Diap1. In Drosophila simulans (Fruit fly), this protein is Serine protease HTRA2, mitochondrial.